The primary structure comprises 419 residues: Endochitinase 2 (419 aa).

Positions Met-1–Gly-18 are cleaved as a signal peptide. Residues Ala-35–Gly-343 enclose the GH18 domain. N-linked (GlcNAc...) asparagine glycosylation is present at Asn-153. The Proton donor role is filled by Glu-173. N-linked (GlcNAc...) asparagine glycosylation is found at Asn-237 and Asn-256. A disordered region spans residues Gly-343–Gln-390. The span at Thr-355 to Thr-384 shows a compositional bias: low complexity. One can recognise a CBM1 domain in the interval Gly-383–Arg-419.

The protein belongs to the glycosyl hydrolase 18 family. Chitinase class III subfamily.

It localises to the secreted. The enzyme catalyses Random endo-hydrolysis of N-acetyl-beta-D-glucosaminide (1-&gt;4)-beta-linkages in chitin and chitodextrins.. Functionally, secreted chitinase involved in the degradation of chitin, a component of the cell walls of fungi and exoskeletal elements of some animals (including worms and arthropods). Participates in the infection process and directly acts in the penetration process of the host cuticle. The protein is Endochitinase 2 (chi2) of Metarhizium anisopliae (Entomophthora anisopliae).